We begin with the raw amino-acid sequence, 131 residues long: 1,4-dihydroxy-2-naphthoyl-CoA hydrolase (131 aa).

The active site involves Asp-7.

This sequence belongs to the 4-hydroxybenzoyl-CoA thioesterase family. DHNA-CoA hydrolase subfamily.

The enzyme catalyses 1,4-dihydroxy-2-naphthoyl-CoA + H2O = 1,4-dihydroxy-2-naphthoate + CoA + H(+). Its pathway is cofactor biosynthesis; phylloquinone biosynthesis. It functions in the pathway quinol/quinone metabolism; 1,4-dihydroxy-2-naphthoate biosynthesis; 1,4-dihydroxy-2-naphthoate from chorismate: step 7/7. Catalyzes the hydrolysis of 1,4-dihydroxy-2-naphthoyl-CoA (DHNA-CoA) to 1,4-dihydroxy-2-naphthoate (DHNA), a reaction involved in phylloquinone (vitamin K1) biosynthesis. The protein is 1,4-dihydroxy-2-naphthoyl-CoA hydrolase of Synechococcus sp. (strain RCC307).